A 218-amino-acid chain; its full sequence is Adenylate kinase (218 aa).

10-15 lines the ATP pocket; that stretch reads GAGKGT. The tract at residues 30–59 is NMP; it reads STGDMLRAAIQAQTPLGLEAKKVMDDGKLV. AMP is bound by residues Thr31, Arg36, 57–59, 85–88, and Gln92; these read KLV and GFPR. The LID stretch occupies residues 122–159; that stretch reads GRRVHLASGRTYHVIFNPPKKEGVDDITGEPLIQREDD. ATP-binding positions include Arg123 and 132 to 133; that span reads TY. Residues Arg156 and Arg167 each contribute to the AMP site. Gly203 provides a ligand contact to ATP.

It belongs to the adenylate kinase family. As to quaternary structure, monomer.

It localises to the cytoplasm. It carries out the reaction AMP + ATP = 2 ADP. The protein operates within purine metabolism; AMP biosynthesis via salvage pathway; AMP from ADP: step 1/1. In terms of biological role, catalyzes the reversible transfer of the terminal phosphate group between ATP and AMP. Plays an important role in cellular energy homeostasis and in adenine nucleotide metabolism. In Prosthecochloris aestuarii (strain DSM 271 / SK 413), this protein is Adenylate kinase.